The following is a 427-amino-acid chain: Enolase (427 aa).

(2R)-2-phosphoglycerate is bound at residue Gln-162. The active-site Proton donor is the Glu-204. Residues Asp-241, Glu-282, and Asp-309 each coordinate Mg(2+). (2R)-2-phosphoglycerate-binding residues include Lys-334, Arg-363, Ser-364, and Lys-385. Catalysis depends on Lys-334, which acts as the Proton acceptor.

Belongs to the enolase family. It depends on Mg(2+) as a cofactor.

It is found in the cytoplasm. The protein resides in the secreted. Its subcellular location is the cell surface. The enzyme catalyses (2R)-2-phosphoglycerate = phosphoenolpyruvate + H2O. It participates in carbohydrate degradation; glycolysis; pyruvate from D-glyceraldehyde 3-phosphate: step 4/5. Its function is as follows. Catalyzes the reversible conversion of 2-phosphoglycerate (2-PG) into phosphoenolpyruvate (PEP). It is essential for the degradation of carbohydrates via glycolysis. The protein is Enolase of Frankia casuarinae (strain DSM 45818 / CECT 9043 / HFP020203 / CcI3).